Reading from the N-terminus, the 1770-residue chain is Transposon Ty2-C Gag-Pol polyprotein (1770 aa).

Polar residues-rich tracts occupy residues 1 to 11, 19 to 39, and 49 to 60; these read MESQQLHQNPR, ASVTSKEVPSNQDPLAVSASN, and KVNSQQETTPGT. Disordered stretches follow at residues 1–88 and 355–453; these read MESQ…YQQH and SQYK…LPDH. The RNA-binding stretch occupies residues 295–397; that stretch reads ENNINVSDRL…SSKPRAAKAH (103 aa). The segment covering 369–382 has biased composition (low complexity); the sequence is TSPNTTNTKVTTRN. Composition is skewed to polar residues over residues 399 to 408 and 415 to 435; these read IATSSKFSRV and ESTVSSQYLSDDNELSLGQQQ. The active-site For protease activity; shared with dimeric partner is the aspartate 457. The segment at 579–636 is integrase-type zinc finger-like; that stretch reads NVNKSKSVNKYPYPLIHRMLGHANFRSIQKSLKKNAVTYLKESDIEWSNASTYQCPDC. Positions 656-831 constitute an Integrase catalytic domain; it reads ESYEPFQYLH…AGLDITTILP (176 aa). Residues aspartate 667 and aspartate 732 each coordinate Mg(2+). Disordered stretches follow at residues 1003-1038 and 1057-1205; these read EMGGTVESDTTSPRHSSTFTARNQKRPGSPNDMIDL and GGTE…TEIE. Composition is skewed to polar residues over residues 1009–1024 and 1065–1082; these read ESDTTSPRHSSTFTAR and QRNSDTNIKYRTTNSTPS. The Bipartite nuclear localization signal signature appears at 1193–1227; the sequence is KKRSLEDNETEIEVSRDTWNNKNMRSLEPPRSKKR. The Reverse transcriptase Ty1/copia-type domain occupies 1353 to 1491; that stretch reads NDYYITQLDI…DILGLEIKYQ (139 aa). Residues aspartate 1361, aspartate 1442, aspartate 1443, aspartate 1625, glutamate 1667, and aspartate 1700 each contribute to the Mg(2+) site. The 143-residue stretch at 1625–1767 folds into the RNase H Ty1/copia-type domain; it reads DASYGNQPYY…IKTFKLLTNK (143 aa).

The capsid protein forms a homotrimer, from which the VLPs are assembled. The protease is a homodimer, whose active site consists of two apposed aspartic acid residues. Initially, virus-like particles (VLPs) are composed of the structural unprocessed proteins Gag and Gag-Pol, and also contain the host initiator methionine tRNA (tRNA(i)-Met) which serves as a primer for minus-strand DNA synthesis, and a dimer of genomic Ty RNA. Processing of the polyproteins occurs within the particle and proceeds by an ordered pathway, called maturation. First, the protease (PR) is released by autocatalytic cleavage of the Gag-Pol polyprotein, and this cleavage is a prerequisite for subsequent processing at the remaining sites to release the mature structural and catalytic proteins. Maturation takes place prior to the RT reaction and is required to produce transposition-competent VLPs.

It is found in the cytoplasm. The protein resides in the nucleus. It carries out the reaction DNA(n) + a 2'-deoxyribonucleoside 5'-triphosphate = DNA(n+1) + diphosphate. The catalysed reaction is Endonucleolytic cleavage to 5'-phosphomonoester.. Its function is as follows. Capsid protein (CA) is the structural component of the virus-like particle (VLP), forming the shell that encapsulates the retrotransposons dimeric RNA genome. The particles are assembled from trimer-clustered units and there are holes in the capsid shells that allow for the diffusion of macromolecules. CA also has nucleocapsid-like chaperone activity, promoting primer tRNA(i)-Met annealing to the multipartite primer-binding site (PBS), dimerization of Ty2 RNA and initiation of reverse transcription. The aspartyl protease (PR) mediates the proteolytic cleavages of the Gag and Gag-Pol polyproteins after assembly of the VLP. Functionally, reverse transcriptase/ribonuclease H (RT) is a multifunctional enzyme that catalyzes the conversion of the retro-elements RNA genome into dsDNA within the VLP. The enzyme displays a DNA polymerase activity that can copy either DNA or RNA templates, and a ribonuclease H (RNase H) activity that cleaves the RNA strand of RNA-DNA heteroduplexes during plus-strand synthesis and hydrolyzes RNA primers. The conversion leads to a linear dsDNA copy of the retrotransposon that includes long terminal repeats (LTRs) at both ends. In terms of biological role, integrase (IN) targets the VLP to the nucleus, where a subparticle preintegration complex (PIC) containing at least integrase and the newly synthesized dsDNA copy of the retrotransposon must transit the nuclear membrane. Once in the nucleus, integrase performs the integration of the dsDNA into the host genome. This Saccharomyces cerevisiae (strain ATCC 204508 / S288c) (Baker's yeast) protein is Transposon Ty2-C Gag-Pol polyprotein (TY2B-C).